The chain runs to 384 residues: DNA dC-&gt;dU-editing enzyme APOBEC-3G (384 aa).

The segment at 1–60 (MNPQFRNMVDGMDPHKFSYNFKNRPILSRRNTVWLCYEVKTKGPSRPPLDAKIFRGQVYF) is essential for cytoplasmic localization. CMP/dCMP-type deaminase domains follow at residues 29–138 (RRNT…LRSL) and 214–328 (GRHE…LRTL). Thr32 carries the post-translational modification Phosphothreonine; by PKA. Residues His65, Cys97, and Cys100 each coordinate Zn(2+). Positions 209 to 336 (EPCVEGRHET…TLDEAEAKIS (128 aa)) are necessary for homooligomerization. The tract at residues 213-215 (EGR) is interaction with DNA. Residue Thr218 is modified to Phosphothreonine; by PKA and CAMK2. His257 contacts Zn(2+). The active-site Proton donor is Glu259. Positions 288 and 291 each coordinate Zn(2+). The interaction with DNA stretch occupies residues 313–320 (RIYDDQGR).

The protein belongs to the cytidine and deoxycytidylate deaminase family. Homodimer. Zn(2+) is required as a cofactor.

The protein localises to the cytoplasm. The protein resides in the nucleus. Its subcellular location is the P-body. The catalysed reaction is a 2'-deoxycytidine in single-stranded DNA + H2O + H(+) = a 2'-deoxyuridine in single-stranded DNA + NH4(+). Its function is as follows. DNA deaminase (cytidine deaminase) which acts as an inhibitor of retrovirus replication and retrotransposon mobility. After the penetration of retroviral nucleocapsids into target cells of infection and the initiation of reverse transcription, it can induce the conversion of cytosine to uracil in the minus-sense single-strand viral DNA, leading to G-to-A hypermutations in the subsequent plus-strand viral DNA. The resultant detrimental levels of mutations in the proviral genome, along with a deamination-independent mechanism that works prior to the proviral integration, together exert efficient antiretroviral effects in infected target cells. Selectively targets single-stranded DNA and does not deaminate double-stranded DNA or single- or double-stranded RNA. This chain is DNA dC-&gt;dU-editing enzyme APOBEC-3G (APOBEC3G), found in Pongo pygmaeus (Bornean orangutan).